The chain runs to 338 residues: Protein-glutamate methylesterase/protein-glutamine glutaminase 2 (338 aa).

Residues 2–119 (RIGIVNDSAL…SDTKLAAGPL (118 aa)) enclose the Response regulatory domain. Aspartate 53 bears the 4-aspartylphosphate mark. One can recognise a CheB-type methylesterase domain in the interval 145 to 330 (PTPTAPRLVA…PLQKIAPRLV (186 aa)). Residues serine 158, histidine 185, and aspartate 278 contribute to the active site.

It belongs to the CheB family. Phosphorylated by CheA. Phosphorylation of the N-terminal regulatory domain activates the methylesterase activity.

It is found in the cytoplasm. The catalysed reaction is [protein]-L-glutamate 5-O-methyl ester + H2O = L-glutamyl-[protein] + methanol + H(+). The enzyme catalyses L-glutaminyl-[protein] + H2O = L-glutamyl-[protein] + NH4(+). Functionally, involved in chemotaxis. Part of a chemotaxis signal transduction system that modulates chemotaxis in response to various stimuli. Catalyzes the demethylation of specific methylglutamate residues introduced into the chemoreceptors (methyl-accepting chemotaxis proteins or MCP) by CheR. Also mediates the irreversible deamidation of specific glutamine residues to glutamic acid. In Cupriavidus metallidurans (strain ATCC 43123 / DSM 2839 / NBRC 102507 / CH34) (Ralstonia metallidurans), this protein is Protein-glutamate methylesterase/protein-glutamine glutaminase 2.